The sequence spans 187 residues: UPF0301 protein Ppha_2142 (187 aa).

The protein belongs to the UPF0301 (AlgH) family.

This is UPF0301 protein Ppha_2142 from Pelodictyon phaeoclathratiforme (strain DSM 5477 / BU-1).